Reading from the N-terminus, the 236-residue chain is (5-formylfuran-3-yl)methyl phosphate synthase (236 aa).

Catalysis depends on Lys27, which acts as the Schiff-base intermediate with substrate. Residue Lys85 is the Proton acceptor of the active site.

This sequence belongs to the MfnB family.

It carries out the reaction 2 D-glyceraldehyde 3-phosphate = 4-(hydroxymethyl)-2-furancarboxaldehyde phosphate + phosphate + 2 H2O. Its pathway is cofactor biosynthesis; methanofuran biosynthesis. In terms of biological role, catalyzes the formation of 4-(hydroxymethyl)-2-furancarboxaldehyde phosphate (4-HFC-P) from two molecules of glyceraldehyde-3-P (GA-3-P). The sequence is that of (5-formylfuran-3-yl)methyl phosphate synthase from Methanococcus maripaludis (strain DSM 14266 / JCM 13030 / NBRC 101832 / S2 / LL).